The chain runs to 192 residues: Nucleoside triphosphate pyrophosphatase (192 aa).

Residue D73 is the Proton acceptor of the active site.

Belongs to the Maf family. The cofactor is a divalent metal cation.

Its subcellular location is the cytoplasm. The enzyme catalyses a ribonucleoside 5'-triphosphate + H2O = a ribonucleoside 5'-phosphate + diphosphate + H(+). The catalysed reaction is a 2'-deoxyribonucleoside 5'-triphosphate + H2O = a 2'-deoxyribonucleoside 5'-phosphate + diphosphate + H(+). Nucleoside triphosphate pyrophosphatase. May have a dual role in cell division arrest and in preventing the incorporation of modified nucleotides into cellular nucleic acids. This Ehrlichia chaffeensis (strain ATCC CRL-10679 / Arkansas) protein is Nucleoside triphosphate pyrophosphatase.